The sequence spans 134 residues: UPF0412 protein YaaI (134 aa).

Residues 1 to 23 (MKSVFTLSASLAISLLLCCTAQA) form the signal peptide.

The protein belongs to the UPF0412 family.

The chain is UPF0412 protein YaaI from Escherichia coli O7:K1 (strain IAI39 / ExPEC).